The primary structure comprises 261 residues: Cytochrome c oxidase subunit 3 (261 aa).

At 1 to 15 the chain is on the mitochondrial matrix side; that stretch reads MSHQAHAYHMVDPSP. The chain crosses the membrane as a helical span at residues 16–34; it reads WPLTGAGAALLMTSGLAMW. Topologically, residues 35–40 are mitochondrial intermembrane; it reads FHKNSC. The chain crosses the membrane as a helical span at residues 41 to 66; sequence ILMTLGLILMLLTMYQWWRDIVREGT. Over 67–72 the chain is Mitochondrial matrix; the sequence is FLGHHT. Residues 73 to 105 form a helical membrane-spanning segment; the sequence is SPVQQGLRYGMILFIISEVCFFAGFFWAFYHAS. Over 106–128 the chain is Mitochondrial intermembrane; the sequence is LAPTPELGLTWPPTGINPLNPFE. The helical transmembrane segment at 129-152 threads the bilayer; it reads VPLLNTAVLLASGVSVTWAHHSIT. The Mitochondrial matrix segment spans residues 153 to 155; sequence EKN. The chain crosses the membrane as a helical span at residues 156 to 183; sequence RTETTQALTLTVLLGLYFTALQIMEYYE. Residues 184–190 are Mitochondrial intermembrane-facing; the sequence is TPFTMAD. A helical transmembrane segment spans residues 191-223; sequence GVYGSTFFVATGFHGLHVIIGSLFLLTCLLRHL. Residues 224-232 lie on the Mitochondrial matrix side of the membrane; the sequence is QYHFTSKHH. The helical transmembrane segment at 233–256 threads the bilayer; sequence FGFEAAAWYWHFVDVVWLFLYISI. The Mitochondrial intermembrane portion of the chain corresponds to 257–261; that stretch reads YWWGS.

Belongs to the cytochrome c oxidase subunit 3 family. Component of the cytochrome c oxidase (complex IV, CIV), a multisubunit enzyme composed of 14 subunits. The complex is composed of a catalytic core of 3 subunits MT-CO1, MT-CO2 and MT-CO3, encoded in the mitochondrial DNA, and 11 supernumerary subunits COX4I, COX5A, COX5B, COX6A, COX6B, COX6C, COX7A, COX7B, COX7C, COX8 and NDUFA4, which are encoded in the nuclear genome. The complex exists as a monomer or a dimer and forms supercomplexes (SCs) in the inner mitochondrial membrane with NADH-ubiquinone oxidoreductase (complex I, CI) and ubiquinol-cytochrome c oxidoreductase (cytochrome b-c1 complex, complex III, CIII), resulting in different assemblies (supercomplex SCI(1)III(2)IV(1) and megacomplex MCI(2)III(2)IV(2)).

Its subcellular location is the mitochondrion inner membrane. It carries out the reaction 4 Fe(II)-[cytochrome c] + O2 + 8 H(+)(in) = 4 Fe(III)-[cytochrome c] + 2 H2O + 4 H(+)(out). Component of the cytochrome c oxidase, the last enzyme in the mitochondrial electron transport chain which drives oxidative phosphorylation. The respiratory chain contains 3 multisubunit complexes succinate dehydrogenase (complex II, CII), ubiquinol-cytochrome c oxidoreductase (cytochrome b-c1 complex, complex III, CIII) and cytochrome c oxidase (complex IV, CIV), that cooperate to transfer electrons derived from NADH and succinate to molecular oxygen, creating an electrochemical gradient over the inner membrane that drives transmembrane transport and the ATP synthase. Cytochrome c oxidase is the component of the respiratory chain that catalyzes the reduction of oxygen to water. Electrons originating from reduced cytochrome c in the intermembrane space (IMS) are transferred via the dinuclear copper A center (CU(A)) of subunit 2 and heme A of subunit 1 to the active site in subunit 1, a binuclear center (BNC) formed by heme A3 and copper B (CU(B)). The BNC reduces molecular oxygen to 2 water molecules using 4 electrons from cytochrome c in the IMS and 4 protons from the mitochondrial matrix. In Petromyzon marinus (Sea lamprey), this protein is Cytochrome c oxidase subunit 3 (MT-CO3).